A 158-amino-acid chain; its full sequence is Transcription factor BTF3 homolog 4 (158 aa).

Lys-5 is subject to N6-methyllysine. The NAC-A/B domain occupies 33–98 (TADDKKLQSS…AEAKPITEML (66 aa)). Residue Thr-111 is modified to Phosphothreonine. Residues 122 to 158 (RQVLDSKAPKPEDIDEEDDDVPDLVENFDEASKNEAN) form a disordered region. The span at 134–150 (DIDEEDDDVPDLVENFD) shows a compositional bias: acidic residues.

Belongs to the NAC-beta family.

The polypeptide is Transcription factor BTF3 homolog 4 (BTF3L4) (Homo sapiens (Human)).